Reading from the N-terminus, the 385-residue chain is 3-dehydroquinate synthase (385 aa).

NAD(+) is bound by residues 122–126 (GVIGD), 146–147 (TT), Lys159, and Lys168. Glu201, His264, and His282 together coordinate Zn(2+).

Belongs to the sugar phosphate cyclases superfamily. Dehydroquinate synthase family. It depends on Co(2+) as a cofactor. Zn(2+) serves as cofactor. The cofactor is NAD(+).

It localises to the cytoplasm. The enzyme catalyses 7-phospho-2-dehydro-3-deoxy-D-arabino-heptonate = 3-dehydroquinate + phosphate. It functions in the pathway metabolic intermediate biosynthesis; chorismate biosynthesis; chorismate from D-erythrose 4-phosphate and phosphoenolpyruvate: step 2/7. Its function is as follows. Catalyzes the conversion of 3-deoxy-D-arabino-heptulosonate 7-phosphate (DAHP) to dehydroquinate (DHQ). In Rhodospirillum rubrum (strain ATCC 11170 / ATH 1.1.1 / DSM 467 / LMG 4362 / NCIMB 8255 / S1), this protein is 3-dehydroquinate synthase.